The following is a 150-amino-acid chain: MERSFVMVKPDGVQRGLIGEVISRLERRGLKLVAAKLMRVSRELAEEHYAQLKDKPFFPSLIEFITSGPVMAMVWEGPNAISIIRKTMGATNPANAEPGTIRADFACDVSYNVVHGSDGPESAEREIRLWFGEVEPSYSRSVDRWIFPEG.

Residues lysine 9, phenylalanine 57, arginine 85, threonine 91, arginine 102, and asparagine 112 each coordinate ATP. Histidine 115 (pros-phosphohistidine intermediate) is an active-site residue.

The protein belongs to the NDK family. As to quaternary structure, homotetramer. Requires Mg(2+) as cofactor.

The protein localises to the cytoplasm. The enzyme catalyses a 2'-deoxyribonucleoside 5'-diphosphate + ATP = a 2'-deoxyribonucleoside 5'-triphosphate + ADP. It catalyses the reaction a ribonucleoside 5'-diphosphate + ATP = a ribonucleoside 5'-triphosphate + ADP. Its function is as follows. Major role in the synthesis of nucleoside triphosphates other than ATP. The ATP gamma phosphate is transferred to the NDP beta phosphate via a ping-pong mechanism, using a phosphorylated active-site intermediate. This is Nucleoside diphosphate kinase from Symbiobacterium thermophilum (strain DSM 24528 / JCM 14929 / IAM 14863 / T).